The chain runs to 228 residues: tRNA (carboxymethyluridine(34)-5-O)-methyltransferase (228 aa).

Its subcellular location is the cytoplasm. The protein localises to the nucleus. The catalysed reaction is 5-(carboxymethyl)uridine(34) in tRNA + S-adenosyl-L-methionine = 5-(2-methoxy-2-oxoethyl)uridine(34) in tRNA + S-adenosyl-L-homocysteine. Functionally, required for the methylation of the wobble bases at position 34 in tRNA. Appears to have a role in stress-response. This chain is tRNA (carboxymethyluridine(34)-5-O)-methyltransferase (trm9), found in Schizosaccharomyces pombe (strain 972 / ATCC 24843) (Fission yeast).